We begin with the raw amino-acid sequence, 1693 residues long: Latrophilin Cirl (1693 aa).

Topologically, residues 1–753 are extracellular; that stretch reads MLPTILSISY…LFTMFDGNMR (753 aa). In terms of domain architecture, SUEL-type lectin spans 25-114; the sequence is ACEGKKLTIE…KYLEAHYQCI (90 aa). N-linked (GlcNAc...) asparagine glycosylation occurs at asparagine 142. 2 stretches are compositionally biased toward polar residues: residues 185 to 198 and 256 to 265; these read TAVTHSTPWSSTTA and NVTSPSNTRI. The disordered stretch occupies residues 185 to 299; it reads TAVTHSTPWS…PGTAASGSVA (115 aa). Asparagine 256 carries N-linked (GlcNAc...) asparagine glycosylation. The segment covering 275–299 has biased composition (low complexity); it reads DDGTLLTTKSSPNRPPGTAASGSVA. Asparagine 301, asparagine 340, asparagine 397, asparagine 641, asparagine 689, and asparagine 716 each carry an N-linked (GlcNAc...) asparagine glycan. The segment at 375–399 is disordered; sequence YDEYDDDASSTTPAPSGGDCLHNSS. The GAIN-B domain maps to 564–740; the sequence is KKSKIYSSVV…AILMDVVDEH (177 aa). 2 disulfides stabilise this stretch: cysteine 695–cysteine 722 and cysteine 710–cysteine 724. Residues 695-740 form a GPS region; the sequence is CVFWNYIDHAWSANGCSLESTNRTHSVCSCNHLTNFAILMDVVDEH. The helical transmembrane segment at 754–774 threads the bilayer; sequence IFIYISIGICVVFIVIALLTL. Over 775–787 the chain is Cytoplasmic; the sequence is KLFNGVFVKSART. A helical transmembrane segment spans residues 788–808; that stretch reads SIYTSIYLCLLAIELLFLLGI. The Extracellular segment spans residues 809 to 814; the sequence is EQTETS. The helical transmembrane segment at 815–835 threads the bilayer; sequence IFCGFITIFLHCAILSGTAWF. Residues 836-861 are Cytoplasmic-facing; it reads CYEAFHSYSTLTSDELLLEVDQTPKV. A helical transmembrane segment spans residues 862 to 882; that stretch reads NCYYLLSYGLSLSVVAISLVI. Topologically, residues 883–906 are extracellular; sequence DPSTYTQNDYCVLMEANALFYATF. Residues 907–927 traverse the membrane as a helical segment; sequence VVPVLVFFVAAIGYTFLSWII. Topologically, residues 928 to 954 are cytoplasmic; the sequence is MCRKSRTGLKTKEHTRLASVRFDIRCS. The chain crosses the membrane as a helical span at residues 955 to 975; the sequence is FVFLLLLSAVWCSAYFYLRGA. The Extracellular portion of the chain corresponds to 976-985; sequence KMDDDTADVY. Residues 986-1006 form a helical membrane-spanning segment; the sequence is GYCFICFNTLLGLYIFVFHCI. The Cytoplasmic portion of the chain corresponds to 1007-1693; the sequence is QNEKIRREYR…VRCYLEPLAK (687 aa). At serine 1142 the chain carries Phosphoserine. Disordered stretches follow at residues 1156–1194, 1220–1247, 1294–1319, 1433–1521, and 1601–1673; these read HKQQQQQQQQGPLGESYYHQPDYYSWKQPSTGTGGLKTP, KPNSGQHGKKKRGAGGVPASPSGSLHSR, QQQLRRQQLHQQQQQLSSDEEQAEQH, GGGS…SDER, and LAVN…QQRH. 2 positions are modified to phosphoserine: serine 1239 and serine 1246. Positions 1294–1309 are enriched in low complexity; that stretch reads QQQLRRQQLHQQQQQL. 2 positions are modified to phosphoserine: serine 1310 and serine 1311. Residues 1439 to 1464 are compositionally biased toward low complexity; the sequence is GGSVSSRSQQQQLKKQQQQQSLAQQR. Acidic residues-rich tracts occupy residues 1472-1486 and 1496-1507; these read DDDDDEDEEEDEEAT and CDEDEEEDESDL. Over residues 1508–1521 the composition is skewed to basic and acidic residues; the sequence is EHDAHGLPPQSDER. Residues 1630-1655 are compositionally biased toward low complexity; sequence LQKLSPQSTTSSSSHTSHSNPNLHPH. Basic residues predominate over residues 1656–1672; that stretch reads QLTHPHPHQHPPHHQQR.

It belongs to the G-protein coupled receptor 2 family. LN-TM7 subfamily. As to quaternary structure, forms a heterodimer, consisting of a large extracellular region non-covalently linked to a seven-transmembrane moiety. Proteolytically cleaved into 2 subunits, an extracellular subunit and a seven-transmembrane subunit.

It localises to the cell membrane. The protein is Latrophilin Cirl of Drosophila sechellia (Fruit fly).